Reading from the N-terminus, the 172-residue chain is uncharacterized protein (172 aa).

This is an uncharacterized protein from Aquifex aeolicus (strain VF5).